The primary structure comprises 615 residues: Sterol 3-beta-glucosyltransferase UGT80B1 (615 aa).

Residues 1 to 54 (MASNVFDHPLQELEGEDNGVKSEKASLLETSGSVDTTPEDSGHRSSDGHRGLDH) form a disordered region. Residues 40–54 (DSGHRSSDGHRGLDH) show a composition bias toward basic and acidic residues.

The protein belongs to the glycosyltransferase 28 family. As to expression, expressed in developing seeds, seedlings, leaves and around the apical tip of cotyledons. In embryo, expressed in the seed coat and cotyledons.

The catalysed reaction is a sterol + UDP-alpha-D-glucose = a sterol 3-beta-D-glucoside + UDP + H(+). Functionally, involved in the biosynthesis of sterol glucosides. Catalyzes the synthesis of steryl glycosides (SGs) and acyl steryl glycosides (ASGs) which are the most abundant sterol derivatives in higher plants. Can act on several sterols like sitosterol, campesterol and stigmasterol. Is required for embryonic development, seed suberin accumulation, cutin formation and flavanoid accumulation in the seed coat. Both UGT80A2 and UGT80B1 are required for the normal production of SGs and ASGs in seeds. The chain is Sterol 3-beta-glucosyltransferase UGT80B1 from Arabidopsis thaliana (Mouse-ear cress).